A 116-amino-acid chain; its full sequence is uncharacterized protein (116 aa).

The N-terminal stretch at 1-21 is a signal peptide; sequence MAPSTAMLIMGLLKLPRLRLA.

This is an uncharacterized protein from Saccharomyces cerevisiae (strain ATCC 204508 / S288c) (Baker's yeast).